The following is a 392-amino-acid chain: uncharacterized protein (392 aa).

This sequence belongs to the chlamydial CPn_0675/CT_696/TC_0068 family.

This is an uncharacterized protein from Chlamydia muridarum (strain MoPn / Nigg).